A 67-amino-acid polypeptide reads, in one-letter code: Large ribosomal subunit protein uL29 (67 aa).

Belongs to the universal ribosomal protein uL29 family.

This chain is Large ribosomal subunit protein uL29 (rpmC), found in Thermus thermophilus.